Consider the following 131-residue polypeptide: Ribosome-binding factor A (131 aa).

It belongs to the RbfA family. In terms of assembly, monomer. Binds 30S ribosomal subunits, but not 50S ribosomal subunits or 70S ribosomes.

It localises to the cytoplasm. In terms of biological role, one of several proteins that assist in the late maturation steps of the functional core of the 30S ribosomal subunit. Associates with free 30S ribosomal subunits (but not with 30S subunits that are part of 70S ribosomes or polysomes). Required for efficient processing of 16S rRNA. May interact with the 5'-terminal helix region of 16S rRNA. The chain is Ribosome-binding factor A from Ruegeria pomeroyi (strain ATCC 700808 / DSM 15171 / DSS-3) (Silicibacter pomeroyi).